Reading from the N-terminus, the 370-residue chain is Protein Mut11 (370 aa).

A disordered region spans residues 1-22 (MARGPGDTDMDEASADAAIPSS). WD repeat units lie at residues 38–77 (GHTK…RVNT), 80–119 (GHSC…CLRT), 122–162 (GHTN…CLRE), 165–204 (AHSD…CLKT), 208–247 (RDSP…TRRT), 262–301 (GFLG…VVGR), and 329–370 (GHTA…PAAA).

Belongs to the WD repeat WDR5/wds family.

The protein localises to the nucleus. In terms of biological role, part of a complex involved in 'Lys-4' histone H3 methylation. The polypeptide is Protein Mut11 (Mut11) (Chlamydomonas reinhardtii (Chlamydomonas smithii)).